Here is a 766-residue protein sequence, read N- to C-terminus: Single-minded homolog 1 (766 aa).

Residues 1–53 (MKEKSKNAARTRREKENSEFYELAKLLPLPSAITSQLDKASIIRLTTSYLKMR) form the bHLH domain. PAS domains are found at residues 77-147 (GREL…QPYH) and 218-288 (PPSA…LVKG). Residues 292–335 (TKYYRFLAKHGGWVWVQSYATIVHNSRSSRPHCIVSVNYVLTDT) form the PAC domain. Residues 336–766 (EYKGLQLSLD…GTSVIITNGS (431 aa)) enclose the Single-minded C-terminal domain. Residues 353-365 (AFSYTSSSTPTMT) are compositionally biased toward polar residues. 2 disordered regions span residues 353–431 (AFSY…SQHD) and 528–563 (WDED…EPSK). The short motif at 368–387 (RKGAKSRLSSSKSKSRTSPY) is the Nuclear localization signal element. Over residues 373–385 (SRLSSSKSKSRTS) the composition is skewed to low complexity. The segment covering 394-404 (HTERSESDHDS) has biased composition (basic and acidic residues).

In terms of assembly, efficient DNA binding requires dimerization with another bHLH protein. Heterodimer; forms a heterodimer with ARNT, ARNT2.

It is found in the nucleus. Functionally, transcriptional factor that may have pleiotropic effects during embryogenesis and in the adult. The polypeptide is Single-minded homolog 1 (SIM1) (Pan paniscus (Pygmy chimpanzee)).